The primary structure comprises 150 residues: Protein adenylyltransferase MntA (150 aa).

Residues 32 to 46 (GSRATGNINANSDWD) carry the GSX(10)DXD motif motif. Catalysis depends on residues D44 and D46. Residues D44, D46, and D86 each coordinate Mg(2+).

It belongs to the MntA antitoxin family. Forms a complex with HepT, probably MntA(1):HepT(2) in vivo; can only be purified when both 'Arg-102' and 'Tyr-109' (or 'His-107' and 'Tyr-109') of HepThave been mutated. The fully di-AMPylated HepT homodimer is not found in a complex with MntA. Requires Mg(2+) as cofactor.

It carries out the reaction L-tyrosyl-[protein] + ATP = O-(5'-adenylyl)-L-tyrosyl-[protein] + diphosphate. The enzyme catalyses O-(5'-adenylyl)-L-tyrosyl-[protein] + ATP = O-[5'-(adenylyl-(5'-&gt;3')-adenylyl)]-L-tyrosyl-[protein] + diphosphate. Antitoxin component of a type VII toxin-antitoxin (TA) system. Upon cloning in E.coli neutralizes the effect of cognate toxin HepT. Neutralization is mostly due to di-AMPylation of toxin by this enzyme. Successively di-AMPylates HepT on 'Tyr-109'. In vitro will use ATP, dATP, GTP, dGTP, TTP or UTP to generate a mono-modified protein, but requires a purine nucleotide for the second modification reaction (ATP, dATP or GTP). This is Protein adenylyltransferase MntA from Aphanizomenon flos-aquae (strain 2012/KM1/D3).